The chain runs to 303 residues: Dehydrodolichyl diphosphate synthase 1 (303 aa).

Residues 14-34 (LLFLFLIPCLFITSYIGFPVF) form a helical membrane-spanning segment.

It belongs to the UPP synthase family. It depends on Mg(2+) as a cofactor. Expressed in low levels in the whole plant. Preferentially expressed in roots.

It is found in the endoplasmic reticulum membrane. The catalysed reaction is n isopentenyl diphosphate + (2E,6E)-farnesyl diphosphate = a di-trans,poly-cis-polyprenyl diphosphate + n diphosphate. It functions in the pathway protein modification; protein glycosylation. Its function is as follows. Catalyzes cis-prenyl chain elongation to produce the polyprenyl backbone of dolichol, a glycosyl carrier-lipid required for the biosynthesis of several classes of glycoprotein. The chain is Dehydrodolichyl diphosphate synthase 1 (DPS) from Arabidopsis thaliana (Mouse-ear cress).